The sequence spans 366 residues: Transcription factor IIIA (366 aa).

C2H2-type zinc fingers lie at residues 35 to 59 (YICSFADCGAAYNKNWKLQAHLCKH), 65 to 89 (FPCKEEGCEKGFTSLHHLTRHSLTH), 95 to 120 (FTCDSDGCDLRFTTKANMKKHFNRFH), 127 to 151 (YVCHFENCGKAFKKHNQLKVHQFSH), 157 to 181 (YECPHEGCDKRFSLPSRLKRHEKVH), 184 to 210 (YPCKKDDSCSFVGKTWTLYLKHVAECH), 214 to 236 (AVCDVCNRKFRHKDYLRDHQKTH), 243 to 268 (YLCPRDGCDRSYTTAFNLRSHIQSFH), and 274 to 298 (FVCEHAGCGKCFAMKKSLERHSVVH). S38 carries the post-translational modification Phosphoserine; by CK2. Positions 299-310 (DPEKRKLKEKCP) are enriched in basic and acidic residues. The disordered stretch occupies residues 299-366 (DPEKRKLKEK…SLVLDKLTIQ (68 aa)). S336 is modified (phosphoserine; by CK2; in vitro).

Post-translationally, the N-terminus is blocked. As to expression, synthesized in oocytes and, in much lower levels, in somatic cells.

The protein localises to the nucleus. Involved in ribosomal large subunit biogenesis. Acts both as a positive transcription factor for 5S RNA genes, and as a specific RNA binding protein that complexes with 5S RNA in oocytes to form the 7S ribonucleoprotein storage particle. May play an essential role in the developmental change in 5S RNA gene expression. Interacts with the internal control region (ICR) of approximately 50 bases within the 5S RNA genes, is required for correct transcription of these genes by RNA polymerase III. Also binds the transcribed 5S RNA's. This Xenopus laevis (African clawed frog) protein is Transcription factor IIIA (gtf3a).